A 623-amino-acid chain; its full sequence is Chaperone protein DnaK (623 aa).

The residue at position 175 (Thr175) is a Phosphothreonine; by autocatalysis. The segment at 580–623 (PEGAQGAGFDPNNMGGANAGNASAGNDKKDDNVVDADFKVEDDK) is disordered. Positions 591–604 (NNMGGANAGNASAG) are enriched in low complexity. A compositionally biased stretch (basic and acidic residues) spans 605–623 (NDKKDDNVVDADFKVEDDK).

This sequence belongs to the heat shock protein 70 family.

In terms of biological role, acts as a chaperone. In Clostridium botulinum (strain Hall / ATCC 3502 / NCTC 13319 / Type A), this protein is Chaperone protein DnaK.